The chain runs to 567 residues: MASHVDLLTELQLLEKVPTLERLRAAQKRRAQQLKKWAQYEQDLQHRKRKHERKRSTGGRRKKVSFEASVALLEASLRNDAEEVRYFLKNKVSPDLCNEDGLTALHQCCIDNFEEIVKLLLSHGANVNAKDNELWTPLHAAATCGHINLVKILVQYGADLLAVNSDGNMPYDLCEDEPTLDVIETCMAYQGITQEKINEMRVAPEQQMIADIHCMIAAGQDLDWIDAQGATLLHIAGANGYLRAAELLLDHGVRVDVKDWDGWEPLHAAAFWGQMQMAELLVSHGASLSARTSMDEMPIDLCEEEEFKVLLLELKHKHDVIMKSQLRHKSSLSRRTSSAGSRGKVVRRASLSDRTNLYRKEYEGEAILWQRSAAEDQRTSTYNGDIRETRTDQENKDPNPRLEKPVLLSEFPTKIPRGELDMPVENGLRAPVSAYQYALANGDVWKVHEVPDYSMAYGNPGVADATPPWSSYKEQSPQTLLELKRQRAAAKLLSHPFLSTHLGSSMARTGESSSEGKAPLIGGRTSPYSSNGTSVYYTVTSGDPPLLKFKAPIEEMEEKVHGCCRIS.

The stretch at 15 to 55 (EKVPTLERLRAAQKRRAQQLKKWAQYEQDLQHRKRKHERKR) forms a coiled coil. Ser-69 carries the phosphoserine modification. ANK repeat units lie at residues 100 to 129 (DGLT…NVNA), 133 to 162 (ELWT…DLLA), 228 to 257 (QGAT…RVDV), and 261 to 290 (DGWE…SLSA). Phosphoserine is present on residues Ser-333, Ser-337, and Ser-350. The interval 378-403 (RTSTYNGDIRETRTDQENKDPNPRLE) is disordered. Positions 385–403 (DIRETRTDQENKDPNPRLE) are enriched in basic and acidic residues. Residue Ser-476 is modified to Phosphoserine. Over residues 504–515 (SSMARTGESSSE) the composition is skewed to polar residues. Residues 504–525 (SSMARTGESSSEGKAPLIGGRT) are disordered. The stretch at 530–559 (SNGTSVYYTVTSGDPPLLKFKAPIEEMEEK) is one ANK 5 repeat. Residue Cys-563 is the site of S-palmitoyl cysteine attachment. Cys-564 is subject to Cysteine methyl ester. Cys-564 is lipidated: S-farnesyl cysteine. A propeptide spans 565–567 (RIS) (removed in mature form).

Interacts with PPP1CA, PPP1CB and MSN. Interacts (via its fourth ankyrin repeat) with the mature dimeric form of RPSA/LAMR1. Interacts with EEF1A1. Interacts with PTEN. Interacts with ECE1. In terms of processing, phosphorylated by PKA and, after PKA priming, by GSK3B. Phosphorylation by GSK3B reduces its association with PP1C and enhances PP1C activity. Dephosphorylation by its associated PP1C results in enhanced association with PP1C, but reduced PP1C activity.

Its subcellular location is the cell membrane. It is found in the nucleus. The protein resides in the cell projection. Functionally, regulator of protein phosphatase 1 (PP1) that acts as a positive regulator of pulmonary endothelial cell (EC) barrier function. Involved in the regulation of the PI3K/AKT signaling pathway, angiogenesis and endothelial cell proliferation. Regulates angiogenesis and endothelial cell proliferation through the control of ECE1 dephosphorylation, trafficking and activity. Protects the endothelial barrier from lipopolysaccharide (LPS)-induced vascular leakage. Involved in the regulation of endothelial cell filopodia extension. May be a downstream target for TGF-beta1 signaling cascade in endothelial cells. Involved in PKA-mediated moesin dephosphorylation which is important in EC barrier protection against thrombin stimulation. Promotes the interaction of PPP1CA with RPSA/LAMR1 and in turn facilitates the dephosphorylation of RPSA/LAMR1. Involved in the dephosphorylation of EEF1A1. The sequence is that of Protein phosphatase 1 regulatory inhibitor subunit 16B (PPP1R16B) from Homo sapiens (Human).